Reading from the N-terminus, the 754-residue chain is Phosphoribosylformylglycinamidine synthase subunit PurL (754 aa).

The disordered stretch occupies residues 1–21; it reads MLDTVEHAATTPDQPQPYGEL. Histidine 54 is a catalytic residue. ATP contacts are provided by tyrosine 57 and lysine 101. Glutamate 103 provides a ligand contact to Mg(2+). Substrate-binding positions include 104–107 and arginine 126; that span reads SHNH. Histidine 105 (proton acceptor) is an active-site residue. Aspartate 127 provides a ligand contact to Mg(2+). Glutamine 252 serves as a coordination point for substrate. Position 280 (aspartate 280) interacts with Mg(2+). Residue 324–326 participates in substrate binding; it reads ESQ. Asparagine 512 and glycine 549 together coordinate ATP. Position 550 (asparagine 550) interacts with Mg(2+). Serine 552 lines the substrate pocket.

The protein belongs to the FGAMS family. In terms of assembly, monomer. Part of the FGAM synthase complex composed of 1 PurL, 1 PurQ and 2 PurS subunits.

It is found in the cytoplasm. It carries out the reaction N(2)-formyl-N(1)-(5-phospho-beta-D-ribosyl)glycinamide + L-glutamine + ATP + H2O = 2-formamido-N(1)-(5-O-phospho-beta-D-ribosyl)acetamidine + L-glutamate + ADP + phosphate + H(+). The protein operates within purine metabolism; IMP biosynthesis via de novo pathway; 5-amino-1-(5-phospho-D-ribosyl)imidazole from N(2)-formyl-N(1)-(5-phospho-D-ribosyl)glycinamide: step 1/2. Functionally, part of the phosphoribosylformylglycinamidine synthase complex involved in the purines biosynthetic pathway. Catalyzes the ATP-dependent conversion of formylglycinamide ribonucleotide (FGAR) and glutamine to yield formylglycinamidine ribonucleotide (FGAM) and glutamate. The FGAM synthase complex is composed of three subunits. PurQ produces an ammonia molecule by converting glutamine to glutamate. PurL transfers the ammonia molecule to FGAR to form FGAM in an ATP-dependent manner. PurS interacts with PurQ and PurL and is thought to assist in the transfer of the ammonia molecule from PurQ to PurL. This is Phosphoribosylformylglycinamidine synthase subunit PurL from Mycobacterium bovis (strain ATCC BAA-935 / AF2122/97).